Here is a 335-residue protein sequence, read N- to C-terminus: Ornithine carbamoyltransferase 2, catabolic (335 aa).

Carbamoyl phosphate is bound by residues 62-65 (STRT), Gln-89, Arg-113, and 140-143 (HPTQ). L-ornithine is bound by residues Asn-172, Asp-236, and 240–241 (SM). Residues 277–278 (CL) and Arg-322 each bind carbamoyl phosphate.

It belongs to the aspartate/ornithine carbamoyltransferase superfamily. OTCase family.

It is found in the cytoplasm. The catalysed reaction is carbamoyl phosphate + L-ornithine = L-citrulline + phosphate + H(+). Its pathway is amino-acid degradation; L-arginine degradation via ADI pathway; carbamoyl phosphate from L-arginine: step 2/2. Its function is as follows. Reversibly catalyzes the transfer of the carbamoyl group from carbamoyl phosphate (CP) to the N(epsilon) atom of ornithine (ORN) to produce L-citrulline. The polypeptide is Ornithine carbamoyltransferase 2, catabolic (arcB2) (Staphylococcus epidermidis (strain ATCC 12228 / FDA PCI 1200)).